Consider the following 352-residue polypeptide: MFKSLHQYAHVFSRLSLFGLAFAAAAQAQSQSLTVISFGGATKAAQEQAYFKPFERSGGGQVVAGEYNGEMAKVKAMVDVGKVSWDVVEVESPELLRGCDEGLFERLDPARFGDPAQFVPGTFSECGVATYVWSMVMAYDSTKLARAPQSWADFWNVREFPGKRGLRKGAKYTLEVALLADGVKAEDLYKVLATPEGVSRAFAKLDQLKPNIQWWEAGAQPPQWLAAGDVVMSAAYNGRIAAAQKEGVKLAIVWPGSLYDPEYWAVVKGTPNKALAEKFIAFASQPQTQKVFSEQIPYGPVHKGTLALLPKTVQEALPTAPANLEGARAVDAEFWVDHGEELEQRFNAWAAR.

A signal peptide spans 1-28 (MFKSLHQYAHVFSRLSLFGLAFAAAAQA).

The protein belongs to the bacterial solute-binding protein 1 family.

It localises to the periplasm. Binds specifically gamma-aminobutyric acid (GABA) with nanomolar affinity. Does not bind structurally related compounds such as 4-aminovaleric acid, spermidine, histamine and butyric acid. This is Gamma-aminobutyric acid-binding protein from Pseudomonas aeruginosa (strain ATCC 15692 / DSM 22644 / CIP 104116 / JCM 14847 / LMG 12228 / 1C / PRS 101 / PAO1).